Consider the following 341-residue polypeptide: Ras association domain-containing protein 6 (341 aa).

A Phosphoserine modification is found at Ser-155. In terms of domain architecture, Ras-associating spans 190–278 (YDHETSIFTP…ARIFLMDKDA (89 aa)). Positions 285–332 (VAPYINFHFSFLKSILQRLDEEEKMEIERIMAKFNTERAFILKCLQSK) constitute an SARAH domain.

Interacts with MOAP1. Interaction with activated KRAS is still a matter of debate.

Involved in the induction of apoptosis. May act as a Ras effector protein. May suppress the serum-induced basal levels of NF-kappa-B. The chain is Ras association domain-containing protein 6 (Rassf6) from Rattus norvegicus (Rat).